Here is a 361-residue protein sequence, read N- to C-terminus: DNA replication and repair protein RecF (361 aa).

30–37 (GDNAQGKT) lines the ATP pocket.

This sequence belongs to the RecF family.

It localises to the cytoplasm. Its function is as follows. The RecF protein is involved in DNA metabolism; it is required for DNA replication and normal SOS inducibility. RecF binds preferentially to single-stranded, linear DNA. It also seems to bind ATP. This chain is DNA replication and repair protein RecF, found in Clostridium novyi (strain NT).